Consider the following 146-residue polypeptide: Large ribosomal subunit protein uL15 (146 aa).

Basic and acidic residues predominate over residues 1–13; it reads MKLHELQPAEGSR. Residues 1-58 are disordered; it reads MKLHELQPAEGSRKVRNRVGRGIGSGNGKTAGKGHKGQKARSGGGVRPGFEGGQNPLY. Gly residues-rich tracts occupy residues 21 to 31 and 42 to 52; these read RGIGSGNGKTA and SGGGVRPGFEG.

This sequence belongs to the universal ribosomal protein uL15 family. As to quaternary structure, part of the 50S ribosomal subunit.

Its function is as follows. Binds to the 23S rRNA. The polypeptide is Large ribosomal subunit protein uL15 (Shouchella clausii (strain KSM-K16) (Alkalihalobacillus clausii)).